We begin with the raw amino-acid sequence, 507 residues long: tRNA(Ile)-lysidine synthase (507 aa).

S24 to S29 provides a ligand contact to ATP. The 131-residue stretch at P370–L500 folds into the CMP/dCMP-type deaminase domain. Zn(2+)-binding residues include H420, C445, and C448.

The protein belongs to the tRNA(Ile)-lysidine synthase family.

Its subcellular location is the cytoplasm. It catalyses the reaction cytidine(34) in tRNA(Ile2) + L-lysine + ATP = lysidine(34) in tRNA(Ile2) + AMP + diphosphate + H(+). In terms of biological role, ligates lysine onto the cytidine present at position 34 of the AUA codon-specific tRNA(Ile) that contains the anticodon CAU, in an ATP-dependent manner. Cytidine is converted to lysidine, thus changing the amino acid specificity of the tRNA from methionine to isoleucine. This Thermus thermophilus (strain ATCC 27634 / DSM 579 / HB8) protein is tRNA(Ile)-lysidine synthase (tilS).